Reading from the N-terminus, the 274-residue chain is Formamidopyrimidine-DNA glycosylase (274 aa).

The active-site Schiff-base intermediate with DNA is Pro-2. Glu-3 functions as the Proton donor in the catalytic mechanism. Lys-58 functions as the Proton donor; for beta-elimination activity in the catalytic mechanism. Positions 91 and 110 each coordinate DNA. Residues 238 to 272 (QVYDKTGQECVRCGTIIEKIQLGGRGTHFCPNCQR) form an FPG-type zinc finger. The active-site Proton donor; for delta-elimination activity is Arg-262.

It belongs to the FPG family. As to quaternary structure, monomer. Requires Zn(2+) as cofactor.

It catalyses the reaction Hydrolysis of DNA containing ring-opened 7-methylguanine residues, releasing 2,6-diamino-4-hydroxy-5-(N-methyl)formamidopyrimidine.. The enzyme catalyses 2'-deoxyribonucleotide-(2'-deoxyribose 5'-phosphate)-2'-deoxyribonucleotide-DNA = a 3'-end 2'-deoxyribonucleotide-(2,3-dehydro-2,3-deoxyribose 5'-phosphate)-DNA + a 5'-end 5'-phospho-2'-deoxyribonucleoside-DNA + H(+). In terms of biological role, involved in base excision repair of DNA damaged by oxidation or by mutagenic agents. Acts as a DNA glycosylase that recognizes and removes damaged bases. Has a preference for oxidized purines, such as 7,8-dihydro-8-oxoguanine (8-oxoG). Has AP (apurinic/apyrimidinic) lyase activity and introduces nicks in the DNA strand. Cleaves the DNA backbone by beta-delta elimination to generate a single-strand break at the site of the removed base with both 3'- and 5'-phosphates. The sequence is that of Formamidopyrimidine-DNA glycosylase from Streptococcus pneumoniae serotype 4 (strain ATCC BAA-334 / TIGR4).